The sequence spans 429 residues: Adenylosuccinate synthetase (429 aa).

Residues 12 to 18 (GDEGKGK) and 40 to 42 (GHT) contribute to the GTP site. Residue Asp13 is the Proton acceptor of the active site. Residues Asp13 and Gly40 each contribute to the Mg(2+) site. Residues 13–16 (DEGK), 38–41 (NAGH), Thr128, Arg142, Gln223, Thr238, and Arg302 each bind IMP. His41 acts as the Proton donor in catalysis. Residue 298 to 304 (TTTGRPR) participates in substrate binding. Residues Arg304, 330-332 (SID), and 412-414 (SVG) each bind GTP.

Belongs to the adenylosuccinate synthetase family. In terms of assembly, homodimer. Requires Mg(2+) as cofactor.

It localises to the cytoplasm. It carries out the reaction IMP + L-aspartate + GTP = N(6)-(1,2-dicarboxyethyl)-AMP + GDP + phosphate + 2 H(+). It functions in the pathway purine metabolism; AMP biosynthesis via de novo pathway; AMP from IMP: step 1/2. Functionally, plays an important role in the de novo pathway of purine nucleotide biosynthesis. Catalyzes the first committed step in the biosynthesis of AMP from IMP. The polypeptide is Adenylosuccinate synthetase (Lysinibacillus sphaericus (strain C3-41)).